We begin with the raw amino-acid sequence, 438 residues long: Putative hydrolase MSMEG_3995/MSMEI_3903 (438 aa).

Residues D95, D104, E143, and H208 each contribute to the Zn(2+) site. An Isoglutamyl lysine isopeptide (Lys-Gln) (interchain with Q-Cter in protein Pup) cross-link involves residue K217. H400 is a binding site for Zn(2+).

Belongs to the peptidase M20 family. Requires Zn(2+) as cofactor.

This chain is Putative hydrolase MSMEG_3995/MSMEI_3903, found in Mycolicibacterium smegmatis (strain ATCC 700084 / mc(2)155) (Mycobacterium smegmatis).